Reading from the N-terminus, the 187-residue chain is Elongation factor P (187 aa).

Belongs to the elongation factor P family.

It is found in the cytoplasm. It functions in the pathway protein biosynthesis; polypeptide chain elongation. Its function is as follows. Involved in peptide bond synthesis. Stimulates efficient translation and peptide-bond synthesis on native or reconstituted 70S ribosomes in vitro. Probably functions indirectly by altering the affinity of the ribosome for aminoacyl-tRNA, thus increasing their reactivity as acceptors for peptidyl transferase. The sequence is that of Elongation factor P from Brachyspira hyodysenteriae (strain ATCC 49526 / WA1).